The chain runs to 380 residues: Cytochrome b (380 aa).

The next 4 membrane-spanning stretches (helical) occupy residues 34-54 (FGSL…LLAA), 78-99 (WLIR…YLHI), 114-134 (WNTG…GYVL), and 179-199 (FFTL…IHLT). H84 and H98 together coordinate heme b. Heme b is bound by residues H183 and H197. H202 lines the a ubiquinone pocket. Transmembrane regions (helical) follow at residues 227 to 247 (TKDI…ALFS), 289 to 309 (LGGV…PLLH), 321 to 341 (LSQL…WIGS), and 348 to 368 (FIII…ILFP).

The protein belongs to the cytochrome b family. In terms of assembly, the cytochrome bc1 complex contains 11 subunits: 3 respiratory subunits (MT-CYB, CYC1 and UQCRFS1), 2 core proteins (UQCRC1 and UQCRC2) and 6 low-molecular weight proteins (UQCRH/QCR6, UQCRB/QCR7, UQCRQ/QCR8, UQCR10/QCR9, UQCR11/QCR10 and a cleavage product of UQCRFS1). This cytochrome bc1 complex then forms a dimer. The cofactor is heme b.

It localises to the mitochondrion inner membrane. Its function is as follows. Component of the ubiquinol-cytochrome c reductase complex (complex III or cytochrome b-c1 complex) that is part of the mitochondrial respiratory chain. The b-c1 complex mediates electron transfer from ubiquinol to cytochrome c. Contributes to the generation of a proton gradient across the mitochondrial membrane that is then used for ATP synthesis. The polypeptide is Cytochrome b (MT-CYB) (Eudyptes chrysolophus (Macaroni penguin)).